A 239-amino-acid polypeptide reads, in one-letter code: Probable transcriptional regulator ycf27 (239 aa).

A Response regulatory domain is found at 7–120 (KILVVDDEIS…ELEARIRSLL (114 aa)). Aspartate 56 carries the post-translational modification 4-aspartylphosphate. A DNA-binding region (H-T-H motif) is located at residues 76–94 (DIPIIMLTALGDVADRITG). Positions 135–236 (GENLQIGFLK…ARGIGYLFQN (102 aa)) form a DNA-binding region, ompR/PhoB-type.

Its subcellular location is the plastid. It is found in the cyanelle. Functionally, probable promoter-specific protein mediating the interaction between DNA and RNA polymerase. This chain is Probable transcriptional regulator ycf27 (ycf27), found in Cyanophora paradoxa.